Reading from the N-terminus, the 146-residue chain is Endothelial differentiation-related factor 1 homolog (146 aa).

Residues Arg13–Val53 form a disordered region. Over residues Ser17 to Gln31 the composition is skewed to low complexity. Basic and acidic residues predominate over residues Arg32–Lys41. The 55-residue stretch at Ile80–Lys134 folds into the HTH cro/C1-type domain. A DNA-binding region (H-T-H motif) is located at residues Gln91 to Cys110.

It is found in the nucleus. Its function is as follows. Probable transcriptional coactivator. This chain is Endothelial differentiation-related factor 1 homolog (edf1), found in Danio rerio (Zebrafish).